A 1203-amino-acid chain; its full sequence is ATP-dependent helicase/nuclease subunit A (1203 aa).

A UvrD-like helicase ATP-binding domain is found at 4-472 (VKLTPEQNEA…IRLKENFRSR (469 aa)). 25-32 (ASAGSGKT) serves as a coordination point for ATP. Positions 503–785 (VQGNISDYPV…RVMTFHKSKG (283 aa)) constitute a UvrD-like helicase C-terminal domain.

Belongs to the helicase family. AddA subfamily. As to quaternary structure, heterodimer of AddA and AddB/RexB. Mg(2+) serves as cofactor.

It carries out the reaction Couples ATP hydrolysis with the unwinding of duplex DNA by translocating in the 3'-5' direction.. The catalysed reaction is ATP + H2O = ADP + phosphate + H(+). The heterodimer acts as both an ATP-dependent DNA helicase and an ATP-dependent, dual-direction single-stranded exonuclease. Recognizes the chi site generating a DNA molecule suitable for the initiation of homologous recombination. The AddA nuclease domain is required for chi fragment generation; this subunit has the helicase and 3' -&gt; 5' nuclease activities. The polypeptide is ATP-dependent helicase/nuclease subunit A (Lactococcus lactis subsp. cremoris (strain SK11)).